Here is a 188-residue protein sequence, read N- to C-terminus: Ion-translocating oxidoreductase complex subunit B (188 aa).

Positions 1 to 23 are hydrophobic; that stretch reads MIEAAVSMSALGLGLGLLLGVAA. Positions 29-88 constitute a 4Fe-4S domain; it reads ESPPIVDAIEGILPGTNCGACGYPGCRGLAEAMSEGAAPVTACAPGGRDVALALAAIVET. Positions 46, 49, 54, 71, 113, 116, 119, 123, 143, 146, 149, and 153 each coordinate [4Fe-4S] cluster. 2 consecutive 4Fe-4S ferredoxin-type domains span residues 104 to 133 and 134 to 163; these read TVAF…GANR and QIHT…ARVK.

Belongs to the 4Fe4S bacterial-type ferredoxin family. RnfB subfamily. In terms of assembly, the complex is composed of six subunits: RnfA, RnfB, RnfC, RnfD, RnfE and RnfG. [4Fe-4S] cluster is required as a cofactor.

Its subcellular location is the cellular chromatophore membrane. Part of a membrane-bound complex that couples electron transfer with translocation of ions across the membrane. The protein is Ion-translocating oxidoreductase complex subunit B of Cereibacter sphaeroides (strain ATCC 17023 / DSM 158 / JCM 6121 / CCUG 31486 / LMG 2827 / NBRC 12203 / NCIMB 8253 / ATH 2.4.1.) (Rhodobacter sphaeroides).